The chain runs to 87 residues: Putative defensin-like protein 235 (87 aa).

Residues 1-26 form the signal peptide; that stretch reads MRSATFFLVSCVLMSFVLSHVKEVEA. 3 disulfide bridges follow: Cys46–Cys73, Cys54–Cys82, and Cys71–Cys84.

The protein belongs to the DEFL family.

Its subcellular location is the secreted. In Arabidopsis thaliana (Mouse-ear cress), this protein is Putative defensin-like protein 235 (SCRL26).